The chain runs to 237 residues: Large ribosomal subunit protein uL1 (237 aa).

The protein belongs to the universal ribosomal protein uL1 family. As to quaternary structure, part of the 50S ribosomal subunit.

Functionally, binds directly to 23S rRNA. The L1 stalk is quite mobile in the ribosome, and is involved in E site tRNA release. In terms of biological role, protein L1 is also a translational repressor protein, it controls the translation of the L11 operon by binding to its mRNA. The sequence is that of Large ribosomal subunit protein uL1 from Corynebacterium kroppenstedtii (strain DSM 44385 / JCM 11950 / CIP 105744 / CCUG 35717).